The sequence spans 71 residues: MPVIKVRDNEPFEVALRRFKRSCEKAGILSEVRRREFYEKPTTERKRAKASAVKRYTKKLARENARRNRLY.

This sequence belongs to the bacterial ribosomal protein bS21 family.

This chain is Small ribosomal subunit protein bS21, found in Baumannia cicadellinicola subsp. Homalodisca coagulata.